The following is a 393-amino-acid chain: MLQRHSLKLGKFSIRTLATGAPLDASKLKITRNPNPSKPRPNEELVFGQTFTDHMLTIPWSAKEGWGTPHIKPYGNLSLDPSACVFHYAFELFEGLKAYRTPQNTITMFRPDKNMARMNKSAARICLPTFESEELIKLTGKLIEQDKHLVPQGNGYSLYIRPTMIGTSKGLGVGTPSEALLYVITSPVGPYYKTGFKAVRLEATDYATRAWPGGVGDKKLGANYAPCILPQLQAAKRGYQQNLWLFGPEKNITEVGTMNVFFVFLNKVTGKKELVTAPLDGTILEGVTRDSVLTLARDKLDPQEWDINERYYTITEVATRAKQGELLEAFGSGTAAVVSPIKEIGWNNEDIHVPLLPGEQCGALTKQVAQWIADIQYGRVNYGNWSKTVADLN.

A mitochondrion-targeting transit peptide spans 1–16; it reads MLQRHSLKLGKFSIRT. Residue K219 is modified to N6-(pyridoxal phosphate)lysine. At T315 the chain carries Phosphothreonine.

Belongs to the class-IV pyridoxal-phosphate-dependent aminotransferase family. Requires pyridoxal 5'-phosphate as cofactor.

It is found in the mitochondrion matrix. It carries out the reaction L-leucine + 2-oxoglutarate = 4-methyl-2-oxopentanoate + L-glutamate. It catalyses the reaction L-isoleucine + 2-oxoglutarate = (S)-3-methyl-2-oxopentanoate + L-glutamate. The catalysed reaction is L-valine + 2-oxoglutarate = 3-methyl-2-oxobutanoate + L-glutamate. The enzyme catalyses a 2-oxocarboxylate + L-methionine = 4-methylsulfanyl-2-oxobutanoate + an L-alpha-amino acid. The protein operates within amino-acid biosynthesis; L-isoleucine biosynthesis; L-isoleucine from 2-oxobutanoate: step 4/4. It participates in amino-acid biosynthesis; L-leucine biosynthesis; L-leucine from 3-methyl-2-oxobutanoate: step 4/4. Its pathway is amino-acid biosynthesis; L-valine biosynthesis; L-valine from pyruvate: step 4/4. It functions in the pathway amino-acid biosynthesis; L-methionine biosynthesis via salvage pathway; L-methionine from S-methyl-5-thio-alpha-D-ribose 1-phosphate: step 6/6. Its function is as follows. Mitochondrial isozyme of branched-chain-amino-acid aminotransferase, involved in the biosynthesis of the branched chain amino acids (BCAAs) leucine, isoleucine, and valine. Catalyzes the formation of methionine from 2-keto-4-methylthiobutyrate (KMTB) in the methionine salvage pathway primarily using BCAAs (leucine, isoleucine, and valine) as the amino donors. Appears to be involved in the regulation of the cell cycle, although this may be indirect via metabolic changes. Connects BCAAs and TCA-cycle metabolism governing TCA-cycle flux to activate TORC1 signaling. High copy suppressor of a temperature-sensitive mutation in the ABC transporter, ATM1. The polypeptide is Branched-chain-amino-acid aminotransferase, mitochondrial (Saccharomyces cerevisiae (strain ATCC 204508 / S288c) (Baker's yeast)).